The sequence spans 238 residues: SH2 domain-containing adapter protein F (238 aa).

2 disordered regions span residues M1–W70 and G85–S121. S39 carries the phosphoserine modification. Acidic residues predominate over residues E55–Q66. Phosphotyrosine is present on Y64. Residues W138 to V233 enclose the SH2 domain.

As to quaternary structure, interacts with phosphorylated 'Tyr-720' of PDGFRA via its SH2 domain. Post-translationally, may become phosphorylated upon binding to PDGFRA.

Its function is as follows. Adapter protein which may play a role in the regulation of apoptosis in response to PDGF. The chain is SH2 domain-containing adapter protein F from Mus musculus (Mouse).